The following is a 232-amino-acid chain: Ornithine carbamoyltransferase (232 aa).

Carbamoyl phosphate-binding positions include Gln-15, Arg-39, and 66 to 69 (HPTQ). L-ornithine-binding positions include Asn-99, Asp-163, and 167 to 168 (SM). Carbamoyl phosphate-binding positions include 204 to 207 (HCLP) and Thr-232.

This sequence belongs to the aspartate/ornithine carbamoyltransferase superfamily. OTCase family.

The protein resides in the cytoplasm. It carries out the reaction carbamoyl phosphate + L-ornithine = L-citrulline + phosphate + H(+). It participates in amino-acid biosynthesis; L-arginine biosynthesis; L-arginine from L-ornithine and carbamoyl phosphate: step 1/3. Reversibly catalyzes the transfer of the carbamoyl group from carbamoyl phosphate (CP) to the N(epsilon) atom of ornithine (ORN) to produce L-citrulline. The polypeptide is Ornithine carbamoyltransferase (argF) (Neisseria subflava).